The following is a 331-amino-acid chain: Biotin synthase (331 aa).

Residues 39-264 (SELQTCYLIS…VFPRSMVRLA (226 aa)) enclose the Radical SAM core domain. Residues Cys-54, Cys-58, and Cys-61 each contribute to the [4Fe-4S] cluster site. [2Fe-2S] cluster-binding residues include Cys-98, Cys-130, Cys-190, and Arg-262.

The protein belongs to the radical SAM superfamily. Biotin synthase family. Homodimer. [4Fe-4S] cluster serves as cofactor. Requires [2Fe-2S] cluster as cofactor.

It carries out the reaction (4R,5S)-dethiobiotin + (sulfur carrier)-SH + 2 reduced [2Fe-2S]-[ferredoxin] + 2 S-adenosyl-L-methionine = (sulfur carrier)-H + biotin + 2 5'-deoxyadenosine + 2 L-methionine + 2 oxidized [2Fe-2S]-[ferredoxin]. It functions in the pathway cofactor biosynthesis; biotin biosynthesis; biotin from 7,8-diaminononanoate: step 2/2. In terms of biological role, catalyzes the conversion of dethiobiotin (DTB) to biotin by the insertion of a sulfur atom into dethiobiotin via a radical-based mechanism. The polypeptide is Biotin synthase (Chlamydia pneumoniae (Chlamydophila pneumoniae)).